The following is a 332-amino-acid chain: Aspartate carbamoyltransferase catalytic subunit (332 aa).

Positions 1 to 20 (MPNTHDTKNNVSPSEYAKFD) are disordered. Arg72 and Thr73 together coordinate carbamoyl phosphate. Lys100 is a binding site for L-aspartate. Carbamoyl phosphate is bound by residues Arg122, His152, and Gln155. 2 residues coordinate L-aspartate: Arg186 and Arg241. Residues Gly282 and Pro283 each coordinate carbamoyl phosphate.

This sequence belongs to the aspartate/ornithine carbamoyltransferase superfamily. ATCase family. Heterododecamer (2C3:3R2) of six catalytic PyrB chains organized as two trimers (C3), and six regulatory PyrI chains organized as three dimers (R2).

The enzyme catalyses carbamoyl phosphate + L-aspartate = N-carbamoyl-L-aspartate + phosphate + H(+). The protein operates within pyrimidine metabolism; UMP biosynthesis via de novo pathway; (S)-dihydroorotate from bicarbonate: step 2/3. Its function is as follows. Catalyzes the condensation of carbamoyl phosphate and aspartate to form carbamoyl aspartate and inorganic phosphate, the committed step in the de novo pyrimidine nucleotide biosynthesis pathway. The chain is Aspartate carbamoyltransferase catalytic subunit from Psychrobacter sp. (strain TAD1).